The chain runs to 368 residues: Aminomethyltransferase (368 aa).

This sequence belongs to the GcvT family. The glycine cleavage system is composed of four proteins: P, T, L and H.

It carries out the reaction N(6)-[(R)-S(8)-aminomethyldihydrolipoyl]-L-lysyl-[protein] + (6S)-5,6,7,8-tetrahydrofolate = N(6)-[(R)-dihydrolipoyl]-L-lysyl-[protein] + (6R)-5,10-methylene-5,6,7,8-tetrahydrofolate + NH4(+). In terms of biological role, the glycine cleavage system catalyzes the degradation of glycine. The polypeptide is Aminomethyltransferase (Thermoanaerobacter sp. (strain X514)).